A 517-amino-acid chain; its full sequence is Ascochitine biosynthesis cluster MFS transporter (517 aa).

Over residues 1–12 (MSPDSRDPEAQR) the composition is skewed to basic and acidic residues. The segment at 1–45 (MSPDSRDPEAQRDVGLTKNTSSVNIPLESVKTDKTSNASPIMGPG) is disordered. N-linked (GlcNAc...) asparagine glycosylation is present at N19. The next 12 helical transmembrane spans lie at 75 to 95 (WVITWLLSFLNVWVTFSSTIF), 111 to 131 (VVMTLGVSLTVLGFAVGPLIW), 141 to 161 (LTPFYFGYAVFCIFQIPVGVA), 172 to 192 (FFIGFFGTSAMAVTPGVLADI), 204 to 224 (VYAAAAFIGPIFGPIVGGFVV), 232 to 252 (WTAWITLILASAFGLAALVFV), 308 to 328 (ILLLVTLYISLVYGVLYLFFV), 347 to 367 (ALPLLAVMLGTLAGCLTILFV), 390 to 410 (LMMVGSVSLPIGLFWFGWTSS), 421 to 441 (AGFPIGIGLALIWVQGLSFLI), 457 to 475 (LIRSAVGAAFPLFGAPMYH), and 485 to 505 (LLGFLSVAMIPIPVAFYYYGP).

This sequence belongs to the major facilitator superfamily. CAR1 family.

Its subcellular location is the membrane. MFS transporter; part of the gene cluster that mediates the biosynthesis the mycotoxin ascochitine, an o-quinone methide that plays a possible protective role against other microbial competitors in nature and is considered to be important for pathogenicity of legume-associated Didymella species. This is Ascochitine biosynthesis cluster MFS transporter from Didymella fabae (Leaf and pod spot disease fungus).